The chain runs to 449 residues: Exodeoxyribonuclease 7 large subunit (449 aa).

This sequence belongs to the XseA family. Heterooligomer composed of large and small subunits.

The protein resides in the cytoplasm. It catalyses the reaction Exonucleolytic cleavage in either 5'- to 3'- or 3'- to 5'-direction to yield nucleoside 5'-phosphates.. Bidirectionally degrades single-stranded DNA into large acid-insoluble oligonucleotides, which are then degraded further into small acid-soluble oligonucleotides. The chain is Exodeoxyribonuclease 7 large subunit from Salmonella schwarzengrund (strain CVM19633).